The primary structure comprises 269 residues: Thiazole synthase (269 aa).

Residue lysine 112 is the Schiff-base intermediate with DXP of the active site. 1-deoxy-D-xylulose 5-phosphate contacts are provided by residues glycine 173, 199–200 (AG), and 221–222 (NT).

It belongs to the ThiG family. As to quaternary structure, homotetramer. Forms heterodimers with either ThiH or ThiS.

It localises to the cytoplasm. It catalyses the reaction [ThiS sulfur-carrier protein]-C-terminal-Gly-aminoethanethioate + 2-iminoacetate + 1-deoxy-D-xylulose 5-phosphate = [ThiS sulfur-carrier protein]-C-terminal Gly-Gly + 2-[(2R,5Z)-2-carboxy-4-methylthiazol-5(2H)-ylidene]ethyl phosphate + 2 H2O + H(+). Its pathway is cofactor biosynthesis; thiamine diphosphate biosynthesis. Its function is as follows. Catalyzes the rearrangement of 1-deoxy-D-xylulose 5-phosphate (DXP) to produce the thiazole phosphate moiety of thiamine. Sulfur is provided by the thiocarboxylate moiety of the carrier protein ThiS. In vitro, sulfur can be provided by H(2)S. This is Thiazole synthase from Caulobacter vibrioides (strain ATCC 19089 / CIP 103742 / CB 15) (Caulobacter crescentus).